The primary structure comprises 199 residues: MEVILLERVAKLGQMGDIVTVKNGYARNFLLKRHKALRATADNRAKYEGMKADLEAKNIAAKGEAAKVAEKIEGRNVVIIRQASEGGQLYGSVSVRDIMAALAADGVSLSRHQVLLEHPIKEIGQHKITIAVHPEVEIHVTATVARSEAEAERINRGEDINSRQEDQDAAAEAIAAAGEFFDPEAQDETPETEAASEQQ.

A compositionally biased stretch (basic and acidic residues) spans 149–166; the sequence is AEAERINRGEDINSRQED. The interval 149–199 is disordered; the sequence is AEAERINRGEDINSRQEDQDAAAEAIAAAGEFFDPEAQDETPETEAASEQQ. Over residues 181–191 the composition is skewed to acidic residues; the sequence is FDPEAQDETPE.

The protein belongs to the bacterial ribosomal protein bL9 family.

Its function is as follows. Binds to the 23S rRNA. This chain is Large ribosomal subunit protein bL9, found in Afipia carboxidovorans (strain ATCC 49405 / DSM 1227 / KCTC 32145 / OM5) (Oligotropha carboxidovorans).